A 629-amino-acid polypeptide reads, in one-letter code: tRNA uridine 5-carboxymethylaminomethyl modification enzyme MnmG (629 aa).

Residue 13–18 (GGGHAG) participates in FAD binding. 273-287 (GPRYCPSIEDKITRF) serves as a coordination point for NAD(+).

This sequence belongs to the MnmG family. As to quaternary structure, homodimer. Heterotetramer of two MnmE and two MnmG subunits. FAD serves as cofactor.

It is found in the cytoplasm. Its function is as follows. NAD-binding protein involved in the addition of a carboxymethylaminomethyl (cmnm) group at the wobble position (U34) of certain tRNAs, forming tRNA-cmnm(5)s(2)U34. This chain is tRNA uridine 5-carboxymethylaminomethyl modification enzyme MnmG, found in Aeromonas hydrophila subsp. hydrophila (strain ATCC 7966 / DSM 30187 / BCRC 13018 / CCUG 14551 / JCM 1027 / KCTC 2358 / NCIMB 9240 / NCTC 8049).